A 99-amino-acid chain; its full sequence is Keratinocyte differentiation-associated protein (99 aa).

An N-terminal signal peptide occupies residues 1–22 (MKIPVLPAVVLLSLLVLHSAQG).

Highly expressed in skin and detected at lower levels in thymus. In skin, found exclusively in lamellar granules of granular keratinocytes and in the intracellular space of the stratum corneum. Also highly expressed in oral mucosa, tongue, esophagus, and stomach, and at much lower levels in bladder and uterus. Not detected in gastrointestinal mucosa.

The protein localises to the secreted. May act as a soluble regulator of keratinocyte differentiation. May play an important role in embryonic skin morphogenesis. The sequence is that of Keratinocyte differentiation-associated protein (KRTDAP) from Homo sapiens (Human).